The chain runs to 277 residues: Large ribosomal subunit protein uL2 (277 aa).

Residues 225-277 (MNPIDHPHGGGEGKTAAGRHPVSPWGTPSKGFRTRVNKRTDGMIVRRRYSNKG) are disordered.

The protein belongs to the universal ribosomal protein uL2 family. As to quaternary structure, part of the 50S ribosomal subunit. Forms a bridge to the 30S subunit in the 70S ribosome.

Functionally, one of the primary rRNA binding proteins. Required for association of the 30S and 50S subunits to form the 70S ribosome, for tRNA binding and peptide bond formation. It has been suggested to have peptidyltransferase activity; this is somewhat controversial. Makes several contacts with the 16S rRNA in the 70S ribosome. The polypeptide is Large ribosomal subunit protein uL2 (Nitrosospira multiformis (strain ATCC 25196 / NCIMB 11849 / C 71)).